Consider the following 551-residue polypeptide: Hydroxylamine reductase (551 aa).

The [2Fe-2S] cluster site is built by cysteine 3, cysteine 6, cysteine 18, and cysteine 25. The hybrid [4Fe-2O-2S] cluster site is built by histidine 249, glutamate 273, cysteine 317, cysteine 405, cysteine 433, cysteine 459, glutamate 493, and lysine 495. Cysteine 405 is subject to Cysteine persulfide.

The protein belongs to the HCP family. The cofactor is [2Fe-2S] cluster. Hybrid [4Fe-2O-2S] cluster is required as a cofactor.

The protein resides in the cytoplasm. It carries out the reaction A + NH4(+) + H2O = hydroxylamine + AH2 + H(+). Its function is as follows. Catalyzes the reduction of hydroxylamine to form NH(3) and H(2)O. The chain is Hydroxylamine reductase from Actinobacillus pleuropneumoniae serotype 5b (strain L20).